A 154-amino-acid chain; its full sequence is Superoxide dismutase [Cu-Zn] (154 aa).

Cu cation contacts are provided by histidine 47, histidine 49, and histidine 64. A disulfide bridge links cysteine 58 with cysteine 147. Zn(2+) is bound by residues histidine 64, histidine 72, histidine 81, and aspartate 84. Histidine 121 is a binding site for Cu cation. A disordered region spans residues 122–143; the sequence is GGTDDLGKGGNEESLKTGNAGP. Positions 123 to 136 are enriched in basic and acidic residues; it reads GTDDLGKGGNEESL. Arginine 144 is a binding site for substrate.

This sequence belongs to the Cu-Zn superoxide dismutase family. Homodimer. Cu cation serves as cofactor. The cofactor is Zn(2+).

Its subcellular location is the cytoplasm. The catalysed reaction is 2 superoxide + 2 H(+) = H2O2 + O2. In terms of biological role, destroys radicals which are normally produced within the cells and which are toxic to biological systems. This is Superoxide dismutase [Cu-Zn] (SOD1) from Cordyceps militaris (Caterpillar fungus).